The sequence spans 199 residues: Recombination protein RecR (199 aa).

A C4-type zinc finger spans residues 57–72 (CQSCRTFTEQDLCPIC). Positions 81 to 176 (GIICVVETPA…VISRIAHGVP (96 aa)) constitute a Toprim domain.

Belongs to the RecR family.

May play a role in DNA repair. It seems to be involved in an RecBC-independent recombinational process of DNA repair. It may act with RecF and RecO. This is Recombination protein RecR from Shewanella frigidimarina (strain NCIMB 400).